A 365-amino-acid polypeptide reads, in one-letter code: Glucose 1-dehydrogenase 1 (365 aa).

Asp-38 serves as a coordination point for Zn(2+). Thr-40 is a binding site for substrate. Residues His-63 and Glu-64 each coordinate Zn(2+). Positions 115 and 151 each coordinate substrate. Glu-151 contacts Zn(2+). NADP(+) contacts are provided by residues 182 to 185 (NGSL), 207 to 208 (RR), 272 to 274 (LGV), and 301 to 303 (SVN). Residue Asn-303 participates in substrate binding.

This sequence belongs to the zinc-containing alcohol dehydrogenase family. Glucose 1-dehydrogenase subfamily. Requires Zn(2+) as cofactor.

It carries out the reaction D-glucose + NAD(+) = D-glucono-1,5-lactone + NADH + H(+). The catalysed reaction is D-glucose + NADP(+) = D-glucono-1,5-lactone + NADPH + H(+). Functionally, catalyzes the NAD(P)(+)-dependent oxidation of D-glucose to D-gluconate via gluconolactone. Can utilize both NAD(+) and NADP(+) as electron acceptor. Is involved in the degradation of glucose through a modified Entner-Doudoroff pathway. The polypeptide is Glucose 1-dehydrogenase 1 (Haloterrigena turkmenica (strain ATCC 51198 / DSM 5511 / JCM 9101 / NCIMB 13204 / VKM B-1734 / 4k) (Halococcus turkmenicus)).